The chain runs to 68 residues: Large ribosomal subunit protein bL35 (68 aa).

The segment at Gly29–Val68 is disordered. Basic residues predominate over residues Asn35–Arg47.

The protein belongs to the bacterial ribosomal protein bL35 family.

This Sulfurihydrogenibium sp. (strain YO3AOP1) protein is Large ribosomal subunit protein bL35.